The chain runs to 180 residues: Cytidylate kinase (180 aa).

Residue 7-15 (GLPGSGTTT) participates in ATP binding.

It belongs to the cytidylate kinase family. Type 2 subfamily.

It is found in the cytoplasm. It catalyses the reaction CMP + ATP = CDP + ADP. The enzyme catalyses dCMP + ATP = dCDP + ADP. This chain is Cytidylate kinase, found in Methanosarcina acetivorans (strain ATCC 35395 / DSM 2834 / JCM 12185 / C2A).